The sequence spans 180 residues: Chorion protein S19 (180 aa).

Residues 1 to 21 (MNTFATLAVLFCACLIGNCHG) form the signal peptide.

Belongs to the chorion protein S19 family.

It is found in the secreted. Its function is as follows. Chorion membrane (egg shell) protein; plays a role in protecting the egg from the environment. The polypeptide is Chorion protein S19 (Cp19) (Drosophila subobscura (Fruit fly)).